The primary structure comprises 34 residues: MEVNILAVIATALFVLIPTAFLLILYVKTESAGS.

Residues 5 to 25 (ILAVIATALFVLIPTAFLLIL) traverse the membrane as a helical segment.

Belongs to the PsbM family. PSII is composed of 1 copy each of membrane proteins PsbA, PsbB, PsbC, PsbD, PsbE, PsbF, PsbH, PsbI, PsbJ, PsbK, PsbL, PsbM, PsbT, PsbX, PsbY, PsbZ, Psb30/Ycf12, at least 3 peripheral proteins of the oxygen-evolving complex and a large number of cofactors. It forms dimeric complexes.

The protein resides in the plastid. The protein localises to the chloroplast thylakoid membrane. In terms of biological role, one of the components of the core complex of photosystem II (PSII). PSII is a light-driven water:plastoquinone oxidoreductase that uses light energy to abstract electrons from H(2)O, generating O(2) and a proton gradient subsequently used for ATP formation. It consists of a core antenna complex that captures photons, and an electron transfer chain that converts photonic excitation into a charge separation. This subunit is found at the monomer-monomer interface. The sequence is that of Photosystem II reaction center protein M from Chaetosphaeridium globosum (Charophycean green alga).